We begin with the raw amino-acid sequence, 320 residues long: Cytochrome f (320 aa).

Positions 1-35 (MQNRNTFSWVKEEMTRFISVSIMIYVITRTSISNA) are cleaved as a signal peptide. Heme is bound by residues Tyr36, Cys56, Cys59, and His60. The helical transmembrane segment at 286 to 306 (VQGLLFFLASVILAQIFLVLK) threads the bilayer.

This sequence belongs to the cytochrome f family. The 4 large subunits of the cytochrome b6-f complex are cytochrome b6, subunit IV (17 kDa polypeptide, petD), cytochrome f and the Rieske protein, while the 4 small subunits are PetG, PetL, PetM and PetN. The complex functions as a dimer. It depends on heme as a cofactor.

It localises to the plastid. Its subcellular location is the chloroplast thylakoid membrane. Component of the cytochrome b6-f complex, which mediates electron transfer between photosystem II (PSII) and photosystem I (PSI), cyclic electron flow around PSI, and state transitions. This is Cytochrome f from Calycanthus floridus var. glaucus (Eastern sweetshrub).